A 667-amino-acid chain; its full sequence is MPPIKRQPGGWVLPGYKYLGPFNPLENGEPVNKADRAAQAHDKSYSEIIKSGKNPYLYFNKADEKFIDDLKNDWSLGGIIGSSFFKLKRAVAPALGNKERAQKRHFYFANSNKGAKKPKNNEPKPGTSKMSENEIQDQQPSGSMEERGGGGGAVGSVGGGKGSSVGISTGGWVGGSYFTDSYVITKNTRQFLVKIQNDHKYRTENIIPSNAGGKSQRCVSTPWSYFNFNQYSSHFSPQDWQHLTNEYKRFKPRKMHVKIYNLQIKQILSNGADTTYNNDLTAGVHIFCDGEHAYPNATHPWDEDVMPELPYETWYLFQYGYIPVIHELAEMEDANAVEKAIALQIPFFMLENSDHEVLRTGESTEFTFDFDCEWINNERAYIPPGLMFNPKVPTRRAQYIRQHGNTASSNTRIQPYAKPTSWMTGPGLLSAQRVGPAGSDTASWMVVVNPDGAAVNSGMAGVGSGFDPPSGSLRPTDLEYKIQWYQTPAGTNSDGNIISNPPLSMLRDQALYRGNQTTYNLCSDVWMFPNQIWDRYPITRENPIWCKKPRSDKNTIIDPFDGTLAMDHPPGTIFIKMAKIPVPSNNNADSYLNIYCTGQVSCEIVWEVERYATKNWRPERRHTALGLGIGGEENVNPTYHVDKNGKYIQPTTWDMCYPIKTNINKVL.

The tract at residues 11–66 is phospholipase A2-like; that stretch reads WVLPGYKYLGPFNPLENGEPVNKADRAAQAHDKSYSEIIKSGKNPYLYFNKADEKF. A disordered region spans residues 107 to 159; that stretch reads YFANSNKGAKKPKNNEPKPGTSKMSENEIQDQQPSGSMEERGGGGGAVGSVGG. Gly residues predominate over residues 149–159; that stretch reads GGGGAVGSVGG. Residues 610–621 carry the Nuclear localization signal motif; that stretch reads RYATKNWRPERR.

The protein belongs to the parvoviridae capsid protein family. Heteromultimer of isoform Minor capsid protein VP1, isoform Minor capsid protein VP2 and isoform Major capsid protein VP3. In terms of assembly, homomultimer. 10 fold more abundant than the minor capsid proteins VP1 and VP2. Heteromultimer of isoform Minor capsid protein VP1, isoform Minor capsid protein VP2 and isoform Major capsid protein VP3.

It is found in the virion. The protein localises to the host nucleus. Its subcellular location is the host cytoplasm. It carries out the reaction a 1,2-diacyl-sn-glycero-3-phosphocholine + H2O = a 1-acyl-sn-glycero-3-phosphocholine + a fatty acid + H(+). Functionally, capsid proteins self-assembles to form an icosahedral capsid with a T=1 symmetry, about 26 nm in diameter, and consisting of 60 copies of three size variants of the capsid proteins, VP1, and VP3, which differ by the presence of an N-terminal extension in the minor protein VP1. The capsid has a channel at the 5-fold axis and there are densities extending the 5-fold axis into the interior of the capsid. The capsid encapsulates the genomic ssDNA. Binding to the host receptors also induces capsid rearrangements leading to surface exposure of VP1 N-terminus, specifically its phospholipase A2-like region. The additional N-terminal region of isoform Minor capsid protein VP1, called VP1u, may serve as a lipolytic enzyme to breach the endosomal membrane during entry into host cell and might contribute to virus transport to the nucleus. In Homo sapiens (Human), this protein is Minor capsid protein VP1 (VP1).